The primary structure comprises 140 residues: Lymphocyte antigen 6H (140 aa).

An N-terminal signal peptide occupies residues 1 to 25; the sequence is MLPAAMKGLGLALLAVLLCSAPAHG. The 66-residue stretch at 26–91 folds into the UPAR/Ly6 domain; the sequence is LWCQDCTLTT…RHFFSDYLMG (66 aa). Intrachain disulfides connect C28–C52, C31–C40, C45–C73, and C77–C104. Residue N36 is glycosylated (N-linked (GlcNAc...) asparagine). A lipid anchor (GPI-anchor amidated glycine) is attached at G115. Positions 116–140 are cleaved as a propeptide — removed in mature form; that stretch reads AGHSPWALAGGLLLSLGPALLWAGP.

As to quaternary structure, interacts with CHRNA4 and CHRNA7.

The protein localises to the cell membrane. Believed to act as a modulator of nicotinic acetylcholine receptors (nAChRs) activity. In vitro inhibits alpha-3:beta-4-containing nAChRs maximum response. May play a role in the intracellular trafficking of alpha-7-containing nAChRs and may inhibit their expression at the cell surface. Seems to inhibit alpha-7/CHRNA7 signaling in hippocampal neurons. The protein is Lymphocyte antigen 6H (LY6H) of Macaca fascicularis (Crab-eating macaque).